A 146-amino-acid polypeptide reads, in one-letter code: Universal stress protein MT1672 (146 aa).

This sequence belongs to the universal stress protein A family.

This Mycobacterium tuberculosis (strain CDC 1551 / Oshkosh) protein is Universal stress protein MT1672.